We begin with the raw amino-acid sequence, 268 residues long: Glucosamine-6-phosphate deaminase (268 aa).

Aspartate 72 functions as the Proton acceptor; for enolization step in the catalytic mechanism. The For ring-opening step role is filled by aspartate 141. Histidine 143 (proton acceptor; for ring-opening step) is an active-site residue. The For ring-opening step role is filled by glutamate 148.

It belongs to the glucosamine/galactosamine-6-phosphate isomerase family. NagB subfamily.

The catalysed reaction is alpha-D-glucosamine 6-phosphate + H2O = beta-D-fructose 6-phosphate + NH4(+). The protein operates within amino-sugar metabolism; N-acetylneuraminate degradation; D-fructose 6-phosphate from N-acetylneuraminate: step 5/5. With respect to regulation, allosterically activated by N-acetylglucosamine 6-phosphate (GlcNAc6P). Its function is as follows. Catalyzes the reversible isomerization-deamination of glucosamine 6-phosphate (GlcN6P) to form fructose 6-phosphate (Fru6P) and ammonium ion. This chain is Glucosamine-6-phosphate deaminase, found in Borrelia garinii subsp. bavariensis (strain ATCC BAA-2496 / DSM 23469 / PBi) (Borreliella bavariensis).